The chain runs to 329 residues: MAGKLMRAVQYDGYGGGAAGLKHVEVPIPSPGKGEVLIKLEAISLNQLDWKLQNGMVRPFLPRKFPFIPATDVAGEVVRIGQDVKNFKPGDKVVAMLGSFGGGGLAEYGVASEKLTVHRPPEVSAAESSGLPIAGLTAHMALTQHIGLNLDKSGPHKNILITAASGGVGQYAVQLAKLGNTHVTATCGSRNFDLVKSLGADEVIDYKTPEGAALKSPSGKKYDAVIHCASPLPWSVFKPNLSKHGKVIDITPGPRVMLTSAMTKLTCSKKRLVTLLVVIKGEHLSYLVELMREGKLKTVIDSKFSLSKAEEAWAKSIDGHATGKIVVEP.

It belongs to the zinc-containing alcohol dehydrogenase family. Quinone oxidoreductase subfamily.

The protein localises to the plastid. It localises to the chloroplast outer membrane. It catalyses the reaction 2 a quinone + NADPH + H(+) = 2 a 1,4-benzosemiquinone + NADP(+). Inhibited by dicumarol. In terms of biological role, NADPH-dependent single-electron reducing quinone reductase. Involved in haustorium initiation in parasitic plants through redox cycling of exogenous haustorium-inducing factors. Can use 9,10-phenanthrenequinone (PAQ), 1,2-naphthoquinone, 5-hydroxy-1,4-naphthoquinone (juglone) and 2,6-dimethoxy-p-benzoquinone (DMBQ) as substrates, but has no activity with menadione, diamide, 2,3-dimethoxy-5-methyl-1,4-benzoquinone or 1,4-naphthoquinone. This Triphysaria versicolor (Yellow owl's clover) protein is Quinone-oxidoreductase QR1, chloroplastic.